We begin with the raw amino-acid sequence, 76 residues long: Alpha/kappa-conotoxin-like fe14.1 (76 aa).

A signal peptide spans 1–24 (MPSVRSVTCCCLLWMMLSVQLVTP). Residues 25-39 (GSPGTAQLSGHRTAR) constitute a propeptide that is removed on maturation. 2 disulfides stabilise this stretch: Cys-46-Cys-61 and Cys-50-Cys-63. Residue Arg-64 is modified to Arginine amide. Residues 65–76 (GKRDVVSSSMAV) constitute a propeptide that is removed on maturation.

This sequence belongs to the conotoxin J superfamily. Expressed by the venom duct.

The protein resides in the secreted. In terms of biological role, highly inhibits both nicotinic acetylcholine receptors (neuronal (alpha-3/beta-4) and muscular (alpha-1/beta-1/epsilon/delta) subtypes) and the voltage-gated potassium channel Kv1.6/KCNA6 subtype. The sequence is that of Alpha/kappa-conotoxin-like fe14.1 from Conus ferrugineus (Cone snail).